The following is a 1661-amino-acid chain: Pentafunctional AROM polypeptide (1661 aa).

Positions 1–388 (MATNGVKAEP…YEKKASSVVD (388 aa)) are 3-dehydroquinate synthase. NAD(+) contacts are provided by residues 50-52 (DTN), 87-90 (ETSK), 118-120 (GGV), and Asp123. Arg134 is a binding site for 7-phospho-2-dehydro-3-deoxy-D-arabino-heptonate. 143 to 144 (TT) contributes to the NAD(+) binding site. Residues Asp150 and Lys156 each contribute to the 7-phospho-2-dehydro-3-deoxy-D-arabino-heptonate site. Lys165 lines the NAD(+) pocket. Asn166 provides a ligand contact to 7-phospho-2-dehydro-3-deoxy-D-arabino-heptonate. NAD(+) contacts are provided by residues 183–186 (FLET) and Asn194. Glu198 lines the Zn(2+) pocket. 7-phospho-2-dehydro-3-deoxy-D-arabino-heptonate is bound by residues 198 to 201 (EVVK) and Lys254. Residue Glu264 is the Proton acceptor; for 3-dehydroquinate synthase activity of the active site. Residues 268–272 (RNLLN) and His275 contribute to the 7-phospho-2-dehydro-3-deoxy-D-arabino-heptonate site. His275 is a binding site for Zn(2+). The Proton acceptor; for 3-dehydroquinate synthase activity role is filled by His279. His291 and Lys360 together coordinate 7-phospho-2-dehydro-3-deoxy-D-arabino-heptonate. His291 serves as a coordination point for Zn(2+). The EPSP synthase stretch occupies residues 401–850 (VHPGIPSDLN…WDILNQQFKA (450 aa)). Cys832 (for EPSP synthase activity) is an active-site residue. Residues 872 to 1064 (QKSIFIIGMR…KKKKQSFFVC (193 aa)) are shikimate kinase. Residue 879–886 (GMRGAGKT) coordinates ATP. The interval 1065–1285 (LSAPNLEPCA…TAPGQLSAAD (221 aa)) is 3-dehydroquinase. His1188 serves as the catalytic Proton acceptor; for 3-dehydroquinate dehydratase activity. Lys1216 (schiff-base intermediate with substrate; for 3-dehydroquinate dehydratase activity) is an active-site residue. Residues 1298 to 1661 (TKKFCIFGSP…LTYSWSLGDW (364 aa)) are shikimate dehydrogenase.

It in the N-terminal section; belongs to the sugar phosphate cyclases superfamily. Dehydroquinate synthase family. In the 2nd section; belongs to the EPSP synthase family. The protein in the 3rd section; belongs to the shikimate kinase family. This sequence in the 4th section; belongs to the type-I 3-dehydroquinase family. It in the C-terminal section; belongs to the shikimate dehydrogenase family. As to quaternary structure, homodimer. It depends on Zn(2+) as a cofactor.

The protein resides in the cytoplasm. It carries out the reaction 7-phospho-2-dehydro-3-deoxy-D-arabino-heptonate = 3-dehydroquinate + phosphate. It catalyses the reaction 3-dehydroquinate = 3-dehydroshikimate + H2O. The enzyme catalyses shikimate + NADP(+) = 3-dehydroshikimate + NADPH + H(+). The catalysed reaction is shikimate + ATP = 3-phosphoshikimate + ADP + H(+). It carries out the reaction 3-phosphoshikimate + phosphoenolpyruvate = 5-O-(1-carboxyvinyl)-3-phosphoshikimate + phosphate. Its pathway is metabolic intermediate biosynthesis; chorismate biosynthesis; chorismate from D-erythrose 4-phosphate and phosphoenolpyruvate: step 2/7. It participates in metabolic intermediate biosynthesis; chorismate biosynthesis; chorismate from D-erythrose 4-phosphate and phosphoenolpyruvate: step 3/7. It functions in the pathway metabolic intermediate biosynthesis; chorismate biosynthesis; chorismate from D-erythrose 4-phosphate and phosphoenolpyruvate: step 4/7. The protein operates within metabolic intermediate biosynthesis; chorismate biosynthesis; chorismate from D-erythrose 4-phosphate and phosphoenolpyruvate: step 5/7. Its pathway is metabolic intermediate biosynthesis; chorismate biosynthesis; chorismate from D-erythrose 4-phosphate and phosphoenolpyruvate: step 6/7. The AROM polypeptide catalyzes 5 consecutive enzymatic reactions in prechorismate polyaromatic amino acid biosynthesis. The chain is Pentafunctional AROM polypeptide from Phaeosphaeria nodorum (strain SN15 / ATCC MYA-4574 / FGSC 10173) (Glume blotch fungus).